The chain runs to 158 residues: Transcriptional repressor NrdR (158 aa).

Residues 1 to 22 (MRCPYCGSEDTQVKDSRPAEDN) form a disordered region. Residues 3–34 (CPYCGSEDTQVKDSRPAEDNTSIRRRRICPDC) fold into a zinc finger. Positions 11 to 22 (TQVKDSRPAEDN) are enriched in basic and acidic residues. In terms of domain architecture, ATP-cone spans 49–139 (LMVIKKTGRK…VYRDFSLAED (91 aa)).

It belongs to the NrdR family. Requires Zn(2+) as cofactor.

Its function is as follows. Negatively regulates transcription of bacterial ribonucleotide reductase nrd genes and operons by binding to NrdR-boxes. This chain is Transcriptional repressor NrdR, found in Rhizobium etli (strain CIAT 652).